The chain runs to 360 residues: Probable dual-specificity RNA methyltransferase RlmN (360 aa).

Catalysis depends on Glu-91, which acts as the Proton acceptor. One can recognise a Radical SAM core domain in the interval 97–335 (QHYGQSVCVT…CVVRQEHGTD (239 aa)). Cys-104 and Cys-340 are joined by a disulfide. [4Fe-4S] cluster-binding residues include Cys-111, Cys-115, and Cys-118. S-adenosyl-L-methionine contacts are provided by residues 163–164 (GE), Ser-195, 218–220 (SLH), and Asn-296. Cys-340 serves as the catalytic S-methylcysteine intermediate.

It belongs to the radical SAM superfamily. RlmN family. The cofactor is [4Fe-4S] cluster.

The protein resides in the cytoplasm. The catalysed reaction is adenosine(2503) in 23S rRNA + 2 reduced [2Fe-2S]-[ferredoxin] + 2 S-adenosyl-L-methionine = 2-methyladenosine(2503) in 23S rRNA + 5'-deoxyadenosine + L-methionine + 2 oxidized [2Fe-2S]-[ferredoxin] + S-adenosyl-L-homocysteine. The enzyme catalyses adenosine(37) in tRNA + 2 reduced [2Fe-2S]-[ferredoxin] + 2 S-adenosyl-L-methionine = 2-methyladenosine(37) in tRNA + 5'-deoxyadenosine + L-methionine + 2 oxidized [2Fe-2S]-[ferredoxin] + S-adenosyl-L-homocysteine. Specifically methylates position 2 of adenine 2503 in 23S rRNA and position 2 of adenine 37 in tRNAs. The polypeptide is Probable dual-specificity RNA methyltransferase RlmN (Streptococcus equi subsp. zooepidemicus (strain MGCS10565)).